Reading from the N-terminus, the 354-residue chain is Galactoside alpha-(1,2)-fucosyltransferase 2 (354 aa).

Residues 1-5 (MASAQ) lie on the Cytoplasmic side of the membrane. Residues 6 to 26 (VPFSFPLAHFLIFVFVTSTIT) traverse the membrane as a helical; Signal-anchor for type II membrane protein segment. Residues 27-354 (HLQQRIVKLQ…PADLSPLLKH (328 aa)) lie on the Lumenal side of the membrane. The tract at residues 43 to 68 (LPMTTQMSSGNTESPEMRRDSEQHGN) is disordered. Positions 45 to 56 (MTTQMSSGNTES) are enriched in polar residues. Over residues 57-68 (PEMRRDSEQHGN) the composition is skewed to basic and acidic residues. Asn199 carries N-linked (GlcNAc...) asparagine glycosylation.

This sequence belongs to the glycosyltransferase 11 family. As to expression, specifically expressed in gut.

The protein resides in the golgi apparatus. It is found in the golgi stack membrane. It carries out the reaction a beta-D-galactosyl-(1-&gt;3)-N-acetyl-beta-D-glucosaminyl derivative + GDP-beta-L-fucose = an alpha-L-Fuc-(1-&gt;2)-beta-D-Gal-(1-&gt;3)-beta-D-GlcNAc derivative + GDP + H(+). The catalysed reaction is a beta-D-galactosyl-(1-&gt;4)-N-acetyl-beta-D-glucosaminyl derivative + GDP-beta-L-fucose = an alpha-L-Fuc-(1-&gt;2)-beta-D-Gal-(1-&gt;4)-beta-D-GlcNAc derivative + GDP + H(+). The enzyme catalyses a ganglioside GM1 (d18:1(4E)) + GDP-beta-L-fucose = a ganglioside Fuc-GM1 (d18:1(4E)) + GDP + H(+). It catalyses the reaction a globoside GalGb4Cer (d18:1(4E)) + GDP-beta-L-fucose = a globoside Globo-H (d18:1(4E)) + GDP + H(+). It carries out the reaction a neolactoside nLc4Cer + GDP-beta-L-fucose = a neolactoside IV(2)-alpha-Fuc-nLc4Cer + GDP + H(+). The catalysed reaction is a neolactoside nLc4Cer(d18:1(4E)) + GDP-beta-L-fucose = a neolactoside IV(2)-alpha-Fuc-nLc4Cer(d18:1(4E)) + GDP + H(+). The enzyme catalyses a ganglioside GM1 + GDP-beta-L-fucose = a ganglioside Fuc-GM1 + GDP + H(+). It catalyses the reaction a ganglioside GA1 + GDP-beta-L-fucose = a ganglioside Fuc-GA1 + GDP + H(+). It carries out the reaction Lc4Cer + GDP-beta-L-fucose = alpha-L-fucosyl-(1-&gt;2)-beta-D-galactosyl-(1-&gt;3)-N-acetyl-beta-D-glucosaminyl-(1-&gt;3)-beta-D-galactosyl-(1-&gt;4)-beta-D-glucosyl-(1&lt;-&gt;1')-ceramide + GDP + H(+). The catalysed reaction is a beta-D-Gal-(1-&gt;3)-beta-D-GlcNAc-(1-&gt;3)-beta-D-Gal-(1-&gt;4)-beta-D-Glc-(1&lt;-&gt;1')-Cer(d18:1(4E)) + GDP-beta-L-fucose = alpha-L-fucosyl-(1-&gt;2)- beta-D-galactosyl-(1-&gt;3)-N-acetyl-beta-D-glucosaminyl-(1-&gt;3)-beta-D-galactosyl-(1-&gt;4)-beta-D-glucosyl-(1&lt;-&gt;1')-N-acylsphing-4-enine + GDP + H(+). The enzyme catalyses a ganglioside GD1b + GDP-beta-L-fucose = a ganglioside Fuc-GD1b + GDP + H(+). It catalyses the reaction a lactoside III(4)-a-Fuc-Lc4Cer + GDP-beta-L-fucose = a lactoside IV(2),III(4)-a-[Fuc]2-Lc4Cer + GDP + H(+). It carries out the reaction beta-D-galactosyl-(1-&gt;3)-N-acetyl-D-galactosamine + GDP-beta-L-fucose = alpha-L-fucosyl-(1-&gt;2)-beta-D-galactosyl-(1-&gt;3)-N-acetyl-D-galactosamine + GDP + H(+). It functions in the pathway protein modification; protein glycosylation. Its function is as follows. Catalyzes the transfer of L-fucose, from a guanosine diphosphate-beta-L-fucose, to the terminal galactose on both O- and N-linked glycans chains of cell surface glycoproteins and glycolipids and the resulting epitope regulates several processes such as cell-cell interaction including host-microbe interaction, cell surface expression and cell proliferation. Preferentially fucosylates gangliosides GA1 and GM1 in the antrum, cecum and colon and in the female reproductive organs. Fucosylated host glycoproteins or glycolipids mediate interaction with intestinal microbiota influencing its composition. Creates a soluble precursor oligosaccharide FuC-alpha ((1,2)Galbeta-) called the H antigen which is an essential substrate for the final step in the soluble ABO blood group antigen synthesis pathway. The sequence is that of Galactoside alpha-(1,2)-fucosyltransferase 2 from Rattus norvegicus (Rat).